A 111-amino-acid chain; its full sequence is Notch-regulated ankyrin repeat-containing protein B (111 aa).

ANK repeat units lie at residues 47–76 and 80–109; these read EGQT…DTRL and DGWS…YSSS.

Belongs to the NRARP family.

Regulates independently canonical Wnt and Notch signaling by modulating LEF1 and Notch protein turnover. Stabilizes LEF1, a pivotal transcription factor in the Wnt signaling cascade, by blocking its ubiquitination. Involved in angiogenesis; involved in intersegmental vessel patterning during development. This Danio rerio (Zebrafish) protein is Notch-regulated ankyrin repeat-containing protein B (nrarpb).